Consider the following 101-residue polypeptide: NAD(P)H-quinone oxidoreductase subunit 4L, chloroplastic (101 aa).

Transmembrane regions (helical) follow at residues 2 to 22 (YIEN…YGLL), 32 to 52 (MCLE…SNFI), and 61 to 81 (VIAI…LALV).

Belongs to the complex I subunit 4L family. In terms of assembly, NDH is composed of at least 16 different subunits, 5 of which are encoded in the nucleus.

It is found in the plastid. The protein localises to the chloroplast thylakoid membrane. It carries out the reaction a plastoquinone + NADH + (n+1) H(+)(in) = a plastoquinol + NAD(+) + n H(+)(out). It catalyses the reaction a plastoquinone + NADPH + (n+1) H(+)(in) = a plastoquinol + NADP(+) + n H(+)(out). In terms of biological role, NDH shuttles electrons from NAD(P)H:plastoquinone, via FMN and iron-sulfur (Fe-S) centers, to quinones in the photosynthetic chain and possibly in a chloroplast respiratory chain. The immediate electron acceptor for the enzyme in this species is believed to be plastoquinone. Couples the redox reaction to proton translocation, and thus conserves the redox energy in a proton gradient. This chain is NAD(P)H-quinone oxidoreductase subunit 4L, chloroplastic, found in Mesostigma viride (Green alga).